Here is a 441-residue protein sequence, read N- to C-terminus: Protein arginine methyltransferase NDUFAF7, mitochondrial (441 aa).

A mitochondrion-targeting transit peptide spans 1–46 (MNFLAAAGVRRLCAMRAVLPCLWRGKYFSSGNEPAENNTVTPMLRH). The segment at 415-434 (GRNHQTNARQSKPSPSPVAG) is disordered. The span at 418 to 427 (HQTNARQSKP) shows a compositional bias: polar residues.

This sequence belongs to the NDUFAF7 family. Interacts with NDUFS2.

The protein resides in the mitochondrion. The enzyme catalyses L-arginyl-[protein] + 2 S-adenosyl-L-methionine = N(omega),N(omega)'-dimethyl-L-arginyl-[protein] + 2 S-adenosyl-L-homocysteine + 2 H(+). Functionally, arginine methyltransferase involved in the assembly or stability of mitochondrial NADH:ubiquinone oxidoreductase complex (complex I). Acts by mediating symmetric dimethylation of 'Arg-118' of NDUFS2 after it assembles into the complex I, stabilizing the early intermediate complex. The polypeptide is Protein arginine methyltransferase NDUFAF7, mitochondrial (Bos taurus (Bovine)).